Here is a 597-residue protein sequence, read N- to C-terminus: Elongation factor 4 (597 aa).

Residues 2-184 (QNIRNFSIIA…DIVKKIPAPE (183 aa)) enclose the tr-type G domain. GTP is bound by residues 14–19 (DHGKST) and 131–134 (NKID).

The protein belongs to the TRAFAC class translation factor GTPase superfamily. Classic translation factor GTPase family. LepA subfamily.

It is found in the cell inner membrane. It carries out the reaction GTP + H2O = GDP + phosphate + H(+). Its function is as follows. Required for accurate and efficient protein synthesis under certain stress conditions. May act as a fidelity factor of the translation reaction, by catalyzing a one-codon backward translocation of tRNAs on improperly translocated ribosomes. Back-translocation proceeds from a post-translocation (POST) complex to a pre-translocation (PRE) complex, thus giving elongation factor G a second chance to translocate the tRNAs correctly. Binds to ribosomes in a GTP-dependent manner. The protein is Elongation factor 4 of Haemophilus ducreyi (strain 35000HP / ATCC 700724).